Consider the following 142-residue polypeptide: Hemoglobin subunit alpha-1 (142 aa).

Ser-1 is modified (N-acetylserine). A Globin domain is found at Ser-1–Arg-142. His-59 is an O2 binding site. His-88 is a binding site for heme b.

It belongs to the globin family. In terms of assembly, hb1 is a heterotetramer of two alpha-2 chains and two beta chains. In terms of tissue distribution, red blood cells.

In terms of biological role, involved in oxygen transport from gills to the various peripheral tissues. The polypeptide is Hemoglobin subunit alpha-1 (hba1) (Notothenia neglecta (Yellowbelly rockcod)).